A 421-amino-acid polypeptide reads, in one-letter code: C2H2 type master regulator of conidiophore development brlA (421 aa).

The segment covering 228-242 (THSPTTPLRSCSIGT) has biased composition (polar residues). The segment at 228–247 (THSPTTPLRSCSIGTASGPD) is disordered. C2H2-type zinc fingers lie at residues 309-333 (FKCK…MKSH) and 339-364 (HVCW…TKTH). The segment covering 361–370 (TKTHSKRGGR) has biased composition (basic residues). The segment at 361-421 (TKTHSKRGGR…REYSVDGLDD (61 aa)) is disordered.

The protein resides in the nucleus. BrlA, abaA and wetA are pivotal regulators of conidiophore development and conidium maturation. They act individually and together to regulate their own expression and that of numerous other sporulation-specific genes. Binds promoters of target genes at brlA response elements (BREs) containing the conserved sequence 5'-(C/A)(A/G)AGGG(G/A)-3'. In Aspergillus parasiticus (strain ATCC 56775 / NRRL 5862 / SRRC 143 / SU-1), this protein is C2H2 type master regulator of conidiophore development brlA.